A 991-amino-acid polypeptide reads, in one-letter code: Integrator complex subunit 10-like protein (991 aa).

Disordered stretches follow at residues 180 to 217 (NNNN…NNNN), 310 to 345 (YFDE…DIEK), 462 to 484 (NDYF…SQES), 549 to 614 (NSSS…GQQP), and 961 to 991 (EKQY…EMNE). Low complexity predominate over residues 319–333 (KQQQQQQQQQQQQEQ). A compositionally biased stretch (acidic residues) spans 473–484 (GGDENDENSQES). Positions 549–609 (NSSSGSNGII…NNNNNNNNNN (61 aa)) are enriched in low complexity. A compositionally biased stretch (polar residues) spans 964-991 (YSSSNTANNSGVNNSPIHNQNTDVEMNE).

The protein resides in the nucleus. Its function is as follows. May be a component of the Integrator complex, a complex involved in the small nuclear RNAs (snRNA) U1 and U2 transcription and in their 3'-box-dependent processing. The chain is Integrator complex subunit 10-like protein from Dictyostelium discoideum (Social amoeba).